The following is a 213-amino-acid chain: MKALKIALTKGRLEKDAVALLEKAGIDCSSMNDKKRKLIFHSSTQPISFILVKAVDVMTYVKHGVADIGIVGKDVLMEASKSHYEMLDLEIGQCQFCLASTPDFDPSSYRRKIIATKYPAVSSKFFRAKGEDVEIIKIEGSVEIAPVLGLADAIIDIVETGSTLKENGLVIYEKMYPISARLIVNKASLKQNKTQIFQLIDQLEQAIKEEQTR.

Belongs to the ATP phosphoribosyltransferase family. Short subfamily. Heteromultimer composed of HisG and HisZ subunits.

Its subcellular location is the cytoplasm. The enzyme catalyses 1-(5-phospho-beta-D-ribosyl)-ATP + diphosphate = 5-phospho-alpha-D-ribose 1-diphosphate + ATP. It functions in the pathway amino-acid biosynthesis; L-histidine biosynthesis; L-histidine from 5-phospho-alpha-D-ribose 1-diphosphate: step 1/9. Catalyzes the condensation of ATP and 5-phosphoribose 1-diphosphate to form N'-(5'-phosphoribosyl)-ATP (PR-ATP). Has a crucial role in the pathway because the rate of histidine biosynthesis seems to be controlled primarily by regulation of HisG enzymatic activity. This chain is ATP phosphoribosyltransferase (hisG), found in Listeria innocua serovar 6a (strain ATCC BAA-680 / CLIP 11262).